The sequence spans 82 residues: Cortexin-1 (82 aa).

Residues 1–20 (MSSAWTLSPEPLPPSTGPPV) are disordered. Residues 30 to 50 (TVFAFVLCLLVVLVLLMVRCV) traverse the membrane as a helical segment.

This sequence belongs to the cortexin family.

The protein localises to the membrane. Functionally, may mediate extracellular or intracellular signaling of cortical neurons during forebrain development. This Mus musculus (Mouse) protein is Cortexin-1 (Ctxn1).